A 173-amino-acid polypeptide reads, in one-letter code: NADH-ubiquinone oxidoreductase chain 6 (173 aa).

Transmembrane regions (helical) follow at residues 1–21 (MTYF…AVAS), 27–47 (YGVL…LSLG), 48–68 (VSFI…VVFV), 87–107 (VVIY…VGDF), and 139–159 (WGAG…FVVL).

This sequence belongs to the complex I subunit 6 family.

It is found in the mitochondrion membrane. It carries out the reaction a ubiquinone + NADH + 5 H(+)(in) = a ubiquinol + NAD(+) + 4 H(+)(out). Functionally, core subunit of the mitochondrial membrane respiratory chain NADH dehydrogenase (Complex I) that is believed to belong to the minimal assembly required for catalysis. Complex I functions in the transfer of electrons from NADH to the respiratory chain. The immediate electron acceptor for the enzyme is believed to be ubiquinone. This chain is NADH-ubiquinone oxidoreductase chain 6 (MT-ND6), found in Struthio camelus (Common ostrich).